Reading from the N-terminus, the 95-residue chain is UPF0473 protein ABC1595 (95 aa).

Belongs to the UPF0473 family.

The polypeptide is UPF0473 protein ABC1595 (Shouchella clausii (strain KSM-K16) (Alkalihalobacillus clausii)).